A 117-amino-acid chain; its full sequence is METKQALEKADIIFSDNAAKKVSTLIEEEKNENLHLRVYITGGGCSGFSYGFNFDETYKEGDSSVENNGVQLVVDPMSYQYLIGATVDYLEDLQGARFIIHNPNAKTTCGCGSSFSV.

Iron-sulfur cluster is bound by residues Cys45, Cys109, and Cys111.

This sequence belongs to the HesB/IscA family. Homodimer. It depends on iron-sulfur cluster as a cofactor.

Functionally, required for insertion of 4Fe-4S clusters for at least IspG. This chain is Iron-sulfur cluster insertion protein ErpA, found in Ruthia magnifica subsp. Calyptogena magnifica.